The primary structure comprises 143 residues: Nucleoside diphosphate kinase (143 aa).

The ATP site is built by Lys11, Phe59, Arg87, Thr93, Arg104, and Asn114. The Pros-phosphohistidine intermediate role is filled by His117.

This sequence belongs to the NDK family. Homotetramer. Mg(2+) serves as cofactor.

The protein localises to the cytoplasm. It carries out the reaction a 2'-deoxyribonucleoside 5'-diphosphate + ATP = a 2'-deoxyribonucleoside 5'-triphosphate + ADP. The enzyme catalyses a ribonucleoside 5'-diphosphate + ATP = a ribonucleoside 5'-triphosphate + ADP. In terms of biological role, major role in the synthesis of nucleoside triphosphates other than ATP. The ATP gamma phosphate is transferred to the NDP beta phosphate via a ping-pong mechanism, using a phosphorylated active-site intermediate. This is Nucleoside diphosphate kinase from Shewanella denitrificans (strain OS217 / ATCC BAA-1090 / DSM 15013).